Reading from the N-terminus, the 478-residue chain is ATP synthase subunit beta (478 aa).

160–167 (GGAGVGKT) serves as a coordination point for ATP.

This sequence belongs to the ATPase alpha/beta chains family. F-type ATPases have 2 components, CF(1) - the catalytic core - and CF(0) - the membrane proton channel. CF(1) has five subunits: alpha(3), beta(3), gamma(1), delta(1), epsilon(1). CF(0) has three main subunits: a(1), b(2) and c(9-12). The alpha and beta chains form an alternating ring which encloses part of the gamma chain. CF(1) is attached to CF(0) by a central stalk formed by the gamma and epsilon chains, while a peripheral stalk is formed by the delta and b chains.

It is found in the cell inner membrane. It catalyses the reaction ATP + H2O + 4 H(+)(in) = ADP + phosphate + 5 H(+)(out). In terms of biological role, produces ATP from ADP in the presence of a proton gradient across the membrane. The catalytic sites are hosted primarily by the beta subunits. In Orientia tsutsugamushi (strain Boryong) (Rickettsia tsutsugamushi), this protein is ATP synthase subunit beta.